The sequence spans 117 residues: Large ribosomal subunit protein bL20c (117 aa).

This sequence belongs to the bacterial ribosomal protein bL20 family.

Its subcellular location is the plastid. It localises to the chloroplast. Functionally, binds directly to 23S ribosomal RNA and is necessary for the in vitro assembly process of the 50S ribosomal subunit. It is not involved in the protein synthesizing functions of that subunit. This chain is Large ribosomal subunit protein bL20c, found in Platanus occidentalis (Sycamore).